The following is a 320-amino-acid chain: MLLDKLSRPLKVLRISLTDRCNLRCNFCMPPGKEYNFLPKRQLLTPEEIEEYVKIFAKLGVEKVRLTGGEPLLREDLEEIIQRISKVEGIKDIALTTNGVFLKERLKALKEAGLKRITVSVHSLNPEKNQKLVNRSVNLGEVFEVIIRAKELGFKVKVNSVIIKGFNDDEILDLARFFKNLGVTLRFIEYMDVGTVNDWDFSKVVSADEILNLMKKEFTFYPLPKRPEDTSMDFIYEDGNKFGIIASVTKPFCRGCNRIRLSADGKLYTCLFSDKGHDLRNAVDKENFIKEVWKDRKDRYSELRRQMKRERKVEMFKVGG.

Residues 5–222 (KLSRPLKVLR…LMKKEFTFYP (218 aa)) enclose the Radical SAM core domain. Arginine 14 provides a ligand contact to GTP. [4Fe-4S] cluster contacts are provided by cysteine 21, cysteine 25, and cysteine 28. Arginine 65 serves as a coordination point for GTP. Glycine 69 contributes to the S-adenosyl-L-methionine binding site. Threonine 96 serves as a coordination point for GTP. An S-adenosyl-L-methionine-binding site is contributed by serine 120. Lysine 157 serves as a coordination point for GTP. Residue methionine 191 coordinates S-adenosyl-L-methionine. [4Fe-4S] cluster contacts are provided by cysteine 253 and cysteine 256. 258–260 (RIR) contacts GTP. Cysteine 270 lines the [4Fe-4S] cluster pocket.

It belongs to the radical SAM superfamily. MoaA family. Monomer and homodimer. It depends on [4Fe-4S] cluster as a cofactor.

The catalysed reaction is GTP + AH2 + S-adenosyl-L-methionine = (8S)-3',8-cyclo-7,8-dihydroguanosine 5'-triphosphate + 5'-deoxyadenosine + L-methionine + A + H(+). Its pathway is cofactor biosynthesis; molybdopterin biosynthesis. Catalyzes the cyclization of GTP to (8S)-3',8-cyclo-7,8-dihydroguanosine 5'-triphosphate. The chain is GTP 3',8-cyclase from Aquifex aeolicus (strain VF5).